The chain runs to 109 residues: Keratin, type II microfibrillar (109 aa).

A linker 1 region spans residues 1–10 (QNRQCCESNL). In terms of domain architecture, IF rod spans 1-109 (QNRQCCESNL…RLYEEEIRVL (109 aa)). The segment at 11-109 (EPLFSGYIET…RLYEEEIRVL (99 aa)) is coil 1B.

The protein belongs to the intermediate filament family.

In terms of biological role, wool microfibrillar keratin. In Ovis aries (Sheep), this protein is Keratin, type II microfibrillar.